The chain runs to 60 residues: Large ribosomal subunit protein uL30 (60 aa).

It belongs to the universal ribosomal protein uL30 family. Part of the 50S ribosomal subunit.

This chain is Large ribosomal subunit protein uL30, found in Streptococcus suis (strain 98HAH33).